Consider the following 404-residue polypeptide: Putative nitronate monooxygenase (404 aa).

Residue 41 to 43 (PMA) participates in FMN binding. The active-site Proton acceptor is His224. Residue His224 coordinates substrate. Residues 270–272 (AGG) and 293–294 (GT) contribute to the FMN site.

This sequence belongs to the nitronate monooxygenase family. NMO class I subfamily. The cofactor is FMN.

Its subcellular location is the cytoplasm. The enzyme catalyses ethylnitronate + O2 = chemical entity + acetaldehyde + nitrite + H(+). Functionally, catalyzes the oxidation of alkyl nitronates to produce the corresponding carbonyl compounds and nitrites. This is Putative nitronate monooxygenase from Saccharomyces cerevisiae (strain ATCC 204508 / S288c) (Baker's yeast).